We begin with the raw amino-acid sequence, 144 residues long: MFLNTIQPAVGATHAGRRVGRGIGSGLGKTGGRGHKGQKSRSGGFHKVGFEGGQMPLQRRLPKRGFKSLTVSANAQLRLSELESIAVNEIDILVLKQAGLIASTVSNVKVIASGEISKAVALKGIKVTKGARAAIEDVGGKIEM.

The tract at residues 20–49 is disordered; sequence GRGIGSGLGKTGGRGHKGQKSRSGGFHKVG. Residues 21–31 show a composition bias toward gly residues; sequence RGIGSGLGKTG.

Belongs to the universal ribosomal protein uL15 family. As to quaternary structure, part of the 50S ribosomal subunit.

Functionally, binds to the 23S rRNA. The sequence is that of Large ribosomal subunit protein uL15 from Neisseria gonorrhoeae (strain ATCC 700825 / FA 1090).